A 95-amino-acid polypeptide reads, in one-letter code: Aspartyl/glutamyl-tRNA(Asn/Gln) amidotransferase subunit C (95 aa).

It belongs to the GatC family. In terms of assembly, heterotrimer of A, B and C subunits.

It catalyses the reaction L-glutamyl-tRNA(Gln) + L-glutamine + ATP + H2O = L-glutaminyl-tRNA(Gln) + L-glutamate + ADP + phosphate + H(+). The enzyme catalyses L-aspartyl-tRNA(Asn) + L-glutamine + ATP + H2O = L-asparaginyl-tRNA(Asn) + L-glutamate + ADP + phosphate + 2 H(+). Allows the formation of correctly charged Asn-tRNA(Asn) or Gln-tRNA(Gln) through the transamidation of misacylated Asp-tRNA(Asn) or Glu-tRNA(Gln) in organisms which lack either or both of asparaginyl-tRNA or glutaminyl-tRNA synthetases. The reaction takes place in the presence of glutamine and ATP through an activated phospho-Asp-tRNA(Asn) or phospho-Glu-tRNA(Gln). This Rhodospirillum rubrum (strain ATCC 11170 / ATH 1.1.1 / DSM 467 / LMG 4362 / NCIMB 8255 / S1) protein is Aspartyl/glutamyl-tRNA(Asn/Gln) amidotransferase subunit C.